Here is an 856-residue protein sequence, read N- to C-terminus: Leucine--tRNA ligase (856 aa).

Residues 53 to 63 carry the 'HIGH' region motif; that stretch reads PYPSGNLHMGH. A 'KMSKS' region motif is present at residues 622-626; it reads KMSKS. Lys-625 provides a ligand contact to ATP.

The protein belongs to the class-I aminoacyl-tRNA synthetase family.

The protein localises to the cytoplasm. The enzyme catalyses tRNA(Leu) + L-leucine + ATP = L-leucyl-tRNA(Leu) + AMP + diphosphate. This chain is Leucine--tRNA ligase, found in Prochlorococcus marinus (strain MIT 9312).